We begin with the raw amino-acid sequence, 306 residues long: Protoheme IX farnesyltransferase (306 aa).

9 consecutive transmembrane segments (helical) span residues 35-55 (LIVF…PTWL), 61-81 (LIAC…NCLV), 106-126 (LTLA…YVWV), 129-149 (LTMW…TVIL), 157-177 (IVIG…AMTG), 183-203 (ALIL…ALAL), 224-244 (EFTR…CLMP), 245-265 (FIFK…SIGF), and 286-306 (RFSL…HYLI).

This sequence belongs to the UbiA prenyltransferase family. Protoheme IX farnesyltransferase subfamily.

The protein localises to the cell inner membrane. It carries out the reaction heme b + (2E,6E)-farnesyl diphosphate + H2O = Fe(II)-heme o + diphosphate. It functions in the pathway porphyrin-containing compound metabolism; heme O biosynthesis; heme O from protoheme: step 1/1. In terms of biological role, converts heme B (protoheme IX) to heme O by substitution of the vinyl group on carbon 2 of heme B porphyrin ring with a hydroxyethyl farnesyl side group. The chain is Protoheme IX farnesyltransferase from Polaromonas naphthalenivorans (strain CJ2).